A 191-amino-acid chain; its full sequence is Peptide methionine sulfoxide reductase MsrA (191 aa).

C21 is a catalytic residue.

Belongs to the MsrA Met sulfoxide reductase family.

The catalysed reaction is L-methionyl-[protein] + [thioredoxin]-disulfide + H2O = L-methionyl-(S)-S-oxide-[protein] + [thioredoxin]-dithiol. It catalyses the reaction [thioredoxin]-disulfide + L-methionine + H2O = L-methionine (S)-S-oxide + [thioredoxin]-dithiol. Functionally, has an important function as a repair enzyme for proteins that have been inactivated by oxidation. Catalyzes the reversible oxidation-reduction of methionine sulfoxide in proteins to methionine. The chain is Peptide methionine sulfoxide reductase MsrA from Ralstonia nicotianae (strain ATCC BAA-1114 / GMI1000) (Ralstonia solanacearum).